The following is a 127-amino-acid chain: Modulator protein MzrA (127 aa).

Over 1 to 10 the chain is Cytoplasmic; that stretch reads MLKPRITARQ. Residues 11–31 form a helical membrane-spanning segment; that stretch reads LIWISAFLLMLTILMMTWSTL. At 32 to 127 the chain is on the periplasmic side; that stretch reads RQQESTLAIR…RLRESSHRFG (96 aa).

This sequence belongs to the MzrA family. Interacts with EnvZ.

The protein resides in the cell inner membrane. In terms of biological role, modulates the activity of the EnvZ/OmpR two-component regulatory system, probably by directly modulating EnvZ enzymatic activity and increasing stability of phosphorylated OmpR. This is Modulator protein MzrA from Salmonella agona (strain SL483).